The following is a 513-amino-acid chain: 2-isopropylmalate synthase (513 aa).

In terms of domain architecture, Pyruvate carboxyltransferase spans 5 to 268 (LIIFDTTLRD…DVGVDTSQIV (264 aa)). Residues Asp14, His202, His204, and Asn239 each contribute to the Mn(2+) site. Residues 394 to 513 (RFISLSQRSE…KAVQKINPQI (120 aa)) are regulatory domain.

This sequence belongs to the alpha-IPM synthase/homocitrate synthase family. LeuA type 1 subfamily. As to quaternary structure, homodimer. Mn(2+) is required as a cofactor.

The protein resides in the cytoplasm. The enzyme catalyses 3-methyl-2-oxobutanoate + acetyl-CoA + H2O = (2S)-2-isopropylmalate + CoA + H(+). The protein operates within amino-acid biosynthesis; L-leucine biosynthesis; L-leucine from 3-methyl-2-oxobutanoate: step 1/4. Its function is as follows. Catalyzes the condensation of the acetyl group of acetyl-CoA with 3-methyl-2-oxobutanoate (2-ketoisovalerate) to form 3-carboxy-3-hydroxy-4-methylpentanoate (2-isopropylmalate). This Cupriavidus pinatubonensis (strain JMP 134 / LMG 1197) (Cupriavidus necator (strain JMP 134)) protein is 2-isopropylmalate synthase.